Here is a 316-residue protein sequence, read N- to C-terminus: Transcription initiation factor IIB (316 aa).

The segment at 7–38 adopts a TFIIB-type zinc-finger fold; it reads FRLRCPVCGSTDIVFNEETGEYVCARCGTIVL. Zn(2+) is bound by residues C11, C14, C30, and C33. A disordered region spans residues 51–73; that stretch reads FTPEERERRGRTGAPLSPTLHDH. Repeat copies occupy residues 124-207 and 218-299.

It belongs to the TFIIB family.

In terms of biological role, stabilizes TBP binding to an archaeal box-A promoter. Also responsible for recruiting RNA polymerase II to the pre-initiation complex (DNA-TBP-TFIIB). This Ignicoccus hospitalis (strain KIN4/I / DSM 18386 / JCM 14125) protein is Transcription initiation factor IIB.